The sequence spans 640 residues: Paramyosin, short form (640 aa).

Nonhelical region stretches follow at residues 1-122 (MALA…PDTV) and 420-640 (KLEQ…TITE). Residues 123–619 (VERSRQRRRR…IIRAKHRTFV (497 aa)) are a coiled coil.

Belongs to the paramyosin family. Phosphorylated. Found in all adult muscle tissues except in indirect flight muscles and a set of temporary abdominal muscles. Not detected in larval muscle.

Its subcellular location is the cytoplasm. It is found in the myofibril. In terms of biological role, paramyosin is a major structural component of many thick filaments isolated from invertebrate muscles. The polypeptide is Paramyosin, short form (Prm) (Drosophila melanogaster (Fruit fly)).